A 1137-amino-acid polypeptide reads, in one-letter code: Isoleucine--tRNA ligase (1137 aa).

Positions 50–60 (PSANGMPGIHH) match the 'HIGH' region motif. The 'KMSKS' region motif lies at 688 to 692 (KMSKR). Lys-691 contributes to the ATP binding site.

This sequence belongs to the class-I aminoacyl-tRNA synthetase family. IleS type 2 subfamily. In terms of assembly, monomer. It depends on Zn(2+) as a cofactor.

Its subcellular location is the cytoplasm. The enzyme catalyses tRNA(Ile) + L-isoleucine + ATP = L-isoleucyl-tRNA(Ile) + AMP + diphosphate. Catalyzes the attachment of isoleucine to tRNA(Ile). As IleRS can inadvertently accommodate and process structurally similar amino acids such as valine, to avoid such errors it has two additional distinct tRNA(Ile)-dependent editing activities. One activity is designated as 'pretransfer' editing and involves the hydrolysis of activated Val-AMP. The other activity is designated 'posttransfer' editing and involves deacylation of mischarged Val-tRNA(Ile). The sequence is that of Isoleucine--tRNA ligase from Porphyromonas gingivalis (strain ATCC BAA-308 / W83).